Reading from the N-terminus, the 201-residue chain is Nascent polypeptide-associated complex subunit alpha (201 aa).

Residues 1–20 (MANPRVEELPDEEVKKTVVD) show a composition bias toward basic and acidic residues. Disordered regions lie at residues 1–51 (MANP…SRNE) and 118–165 (AQQL…IEDK). Positions 21–36 (DHDDDSSSDSDGEEET) are enriched in acidic residues. The 66-residue stretch at 48-113 (SRNEKKARKA…AKIEDLNASA (66 aa)) folds into the NAC-A/B domain. A compositionally biased stretch (basic and acidic residues) spans 126-149 (GHDHDHAGHSHGEAKASEGDAKKE). Positions 150–161 (EEDDDEEVDADG) are enriched in acidic residues. Residues 162 to 200 (IEDKDIELVMTQAGVSRTKAIKALKENDNDIVNSIMALS) enclose the UBA domain.

This sequence belongs to the NAC-alpha family. Part of the nascent polypeptide-associated complex (NAC), consisting of EGD2 and EGD1. NAC associates with ribosomes via EGD1.

It is found in the cytoplasm. It localises to the nucleus. In terms of biological role, component of the nascent polypeptide-associated complex (NAC), a dynamic component of the ribosomal exit tunnel, protecting the emerging polypeptides from interaction with other cytoplasmic proteins to ensure appropriate nascent protein targeting. The NAC complex also promotes mitochondrial protein import by enhancing productive ribosome interactions with the outer mitochondrial membrane and blocks the inappropriate interaction of ribosomes translating non-secretory nascent polypeptides with translocation sites in the membrane of the endoplasmic reticulum. EGD2 may also be involved in transcription regulation. This Pyricularia oryzae (strain 70-15 / ATCC MYA-4617 / FGSC 8958) (Rice blast fungus) protein is Nascent polypeptide-associated complex subunit alpha (EGD2).